The chain runs to 207 residues: dITP/XTP pyrophosphatase (207 aa).

Residue 10 to 15 (TRNAGK) coordinates substrate. Mg(2+) contacts are provided by Glu-43 and Asp-72. Asp-72 serves as the catalytic Proton acceptor. Substrate contacts are provided by residues Ser-73, 161–164 (FGYD), Lys-184, and 189–190 (HR).

Belongs to the HAM1 NTPase family. In terms of assembly, homodimer. Mg(2+) is required as a cofactor.

The enzyme catalyses XTP + H2O = XMP + diphosphate + H(+). The catalysed reaction is dITP + H2O = dIMP + diphosphate + H(+). It carries out the reaction ITP + H2O = IMP + diphosphate + H(+). In terms of biological role, pyrophosphatase that catalyzes the hydrolysis of nucleoside triphosphates to their monophosphate derivatives, with a high preference for the non-canonical purine nucleotides XTP (xanthosine triphosphate), dITP (deoxyinosine triphosphate) and ITP. Seems to function as a house-cleaning enzyme that removes non-canonical purine nucleotides from the nucleotide pool, thus preventing their incorporation into DNA/RNA and avoiding chromosomal lesions. The protein is dITP/XTP pyrophosphatase of Nitratidesulfovibrio vulgaris (strain ATCC 29579 / DSM 644 / CCUG 34227 / NCIMB 8303 / VKM B-1760 / Hildenborough) (Desulfovibrio vulgaris).